The sequence spans 324 residues: Aspartate carbamoyltransferase catalytic subunit (324 aa).

Residues Arg71 and Thr72 each coordinate carbamoyl phosphate. Residue Lys99 participates in L-aspartate binding. Residues Arg121, His151, and Gln154 each coordinate carbamoyl phosphate. The L-aspartate site is built by Arg184 and Arg239. Positions 280 and 281 each coordinate carbamoyl phosphate.

Belongs to the aspartate/ornithine carbamoyltransferase superfamily. ATCase family. As to quaternary structure, heterododecamer (2C3:3R2) of six catalytic PyrB chains organized as two trimers (C3), and six regulatory PyrI chains organized as three dimers (R2).

The catalysed reaction is carbamoyl phosphate + L-aspartate = N-carbamoyl-L-aspartate + phosphate + H(+). It functions in the pathway pyrimidine metabolism; UMP biosynthesis via de novo pathway; (S)-dihydroorotate from bicarbonate: step 2/3. Functionally, catalyzes the condensation of carbamoyl phosphate and aspartate to form carbamoyl aspartate and inorganic phosphate, the committed step in the de novo pyrimidine nucleotide biosynthesis pathway. The polypeptide is Aspartate carbamoyltransferase catalytic subunit (Cupriavidus necator (strain ATCC 17699 / DSM 428 / KCTC 22496 / NCIMB 10442 / H16 / Stanier 337) (Ralstonia eutropha)).